The following is a 532-amino-acid chain: 56 kDa type-specific antigen (532 aa).

A signal peptide spans 1–22 (MKKIMLIASAMSALSLPFSASA). A helical membrane pass occupies residues 67-87 (TNGLPFGGTLAAGMTIAPGFR). The disordered stretch occupies residues 401-428 (QEEDAKNQGEGDCKQQQGTSEKSKKGKD). Basic and acidic residues predominate over residues 403–413 (EDAKNQGEGDC). A helical membrane pass occupies residues 480–500 (TGMVASGALGVAINAAEGVYV).

It is found in the cell membrane. Functionally, may be an adherent factor for rickettsial adsorption to the host-cell surface and a determinant of virulence of individual rickettsial strain. It is the major outer membrane protein. The chain is 56 kDa type-specific antigen from Orientia tsutsugamushi (Rickettsia tsutsugamushi).